The following is a 270-amino-acid chain: DNA packaging protein OPG160 (270 aa).

55–62 (VYNPDYDG) serves as a coordination point for ATP.

This sequence belongs to the orthopoxvirus OPG160 protein family. In terms of assembly, interacts with protein OPG137.

Participates in viral DNA packaging and virion morphogenesis. This is DNA packaging protein OPG160 (OPG160) from Homo sapiens (Human).